A 177-amino-acid polypeptide reads, in one-letter code: Large ribosomal subunit protein uL6 (177 aa).

Belongs to the universal ribosomal protein uL6 family. Part of the 50S ribosomal subunit.

Its function is as follows. This protein binds to the 23S rRNA, and is important in its secondary structure. It is located near the subunit interface in the base of the L7/L12 stalk, and near the tRNA binding site of the peptidyltransferase center. This Thioalkalivibrio sulfidiphilus (strain HL-EbGR7) protein is Large ribosomal subunit protein uL6.